The following is a 475-amino-acid chain: Endoglucanase A (475 aa).

The first 26 residues, 1–26, serve as a signal peptide directing secretion; that stretch reads MKKTTAFLLCFLMIFTALLPMQNANA. Histidine 147 is an active-site residue. The Proton donor role is filled by glutamate 195. The active-site Nucleophile is the glutamate 332. Residues 409-474 form the Dockerin domain; the sequence is PVIVYGDYNN…LLGMVSKLPS (66 aa).

The protein belongs to the glycosyl hydrolase 5 (cellulase A) family.

The enzyme catalyses Endohydrolysis of (1-&gt;4)-beta-D-glucosidic linkages in cellulose, lichenin and cereal beta-D-glucans.. Its function is as follows. The biological conversion of cellulose to glucose generally requires three types of hydrolytic enzymes: (1) Endoglucanases which cut internal beta-1,4-glucosidic bonds; (2) Exocellobiohydrolases that cut the disaccharide cellobiose from the non-reducing end of the cellulose polymer chain; (3) Beta-1,4-glucosidases which hydrolyze the cellobiose and other short cello-oligosaccharides to glucose. This Ruminiclostridium cellulolyticum (strain ATCC 35319 / DSM 5812 / JCM 6584 / H10) (Clostridium cellulolyticum) protein is Endoglucanase A (celCCA).